A 1690-amino-acid polypeptide reads, in one-letter code: DNA-directed RNA polymerase subunit beta' (1690 aa).

4 residues coordinate Zn(2+): Cys-63, Cys-65, Cys-78, and Cys-81. Mg(2+)-binding residues include Asp-753, Asp-755, and Asp-757. Residues Cys-1107, Cys-1295, Cys-1302, and Cys-1305 each coordinate Zn(2+).

Belongs to the RNA polymerase beta' chain family. In terms of assembly, the RNAP catalytic core consists of 2 alpha, 1 beta, 1 beta' and 1 omega subunit. When a sigma factor is associated with the core the holoenzyme is formed, which can initiate transcription. It depends on Mg(2+) as a cofactor. Zn(2+) is required as a cofactor.

The catalysed reaction is RNA(n) + a ribonucleoside 5'-triphosphate = RNA(n+1) + diphosphate. Its function is as follows. DNA-dependent RNA polymerase catalyzes the transcription of DNA into RNA using the four ribonucleoside triphosphates as substrates. This Thermotoga maritima (strain ATCC 43589 / DSM 3109 / JCM 10099 / NBRC 100826 / MSB8) protein is DNA-directed RNA polymerase subunit beta'.